The following is a 500-amino-acid chain: Cholesterol 24-hydroxylase (500 aa).

A helical transmembrane segment spans residues 3-23 (PGLLLLGSAVLLAFGLCCTFV). Cys-437 contributes to the heme binding site.

It belongs to the cytochrome P450 family. It depends on heme as a cofactor. As to expression, expressed in brain. The mRNA was broadly distributed with higher levels in gray matter zones and lower levels in regions rich in white matter. Not detected in fetal sample but its expression increases linearly with age.

The protein localises to the endoplasmic reticulum membrane. It localises to the microsome membrane. It is found in the postsynapse. Its subcellular location is the presynapse. The protein resides in the cell projection. The protein localises to the dendrite. The catalysed reaction is cholesterol + reduced [NADPH--hemoprotein reductase] + O2 = (24S)-hydroxycholesterol + oxidized [NADPH--hemoprotein reductase] + H2O + H(+). It carries out the reaction cholestanol + reduced [NADPH--hemoprotein reductase] + O2 = (24S)-hydroxycholestanol + oxidized [NADPH--hemoprotein reductase] + H2O + H(+). It catalyses the reaction 7-dehydrocholesterol + reduced [NADPH--hemoprotein reductase] + O2 = cholesta-5,7-dien-3beta,24S-diol + oxidized [NADPH--hemoprotein reductase] + H2O + H(+). The enzyme catalyses 7-dehydrocholesterol + reduced [NADPH--hemoprotein reductase] + O2 = cholesta-5,7-dien-3beta,25-diol + oxidized [NADPH--hemoprotein reductase] + H2O + H(+). The catalysed reaction is desmosterol + reduced [NADPH--hemoprotein reductase] + O2 = (24Z),26-hydroxydesmosterol + oxidized [NADPH--hemoprotein reductase] + H2O + H(+). It carries out the reaction desmosterol + reduced [NADPH--hemoprotein reductase] + O2 = (24S)-25-epoxycholesterol + oxidized [NADPH--hemoprotein reductase] + H2O + H(+). It catalyses the reaction 4beta-hydroxycholesterol + reduced [NADPH--hemoprotein reductase] + O2 = 4beta,24S-dihydroxycholesterol + oxidized [NADPH--hemoprotein reductase] + H2O + H(+). The enzyme catalyses (24S)-hydroxycholesterol + reduced [NADPH--hemoprotein reductase] + O2 = (24S,25R)-24,26-dihydroxycholesterol + oxidized [NADPH--hemoprotein reductase] + H2O + H(+). The catalysed reaction is (24S)-hydroxycholesterol + reduced [NADPH--hemoprotein reductase] + O2 = 24S,25-dihydroxycholesterol + oxidized [NADPH--hemoprotein reductase] + H2O + H(+). It carries out the reaction 7alpha-hydroxycholesterol + reduced [NADPH--hemoprotein reductase] + O2 = (24S)-7alpha-dihydroxycholesterol + oxidized [NADPH--hemoprotein reductase] + H2O + H(+). It catalyses the reaction progesterone + reduced [NADPH--hemoprotein reductase] + O2 = 17alpha-hydroxyprogesterone + oxidized [NADPH--hemoprotein reductase] + H2O + H(+). The enzyme catalyses testosterone + reduced [NADPH--hemoprotein reductase] + O2 = 16beta,17beta-dihydroxyandrost-4-en-3-one + oxidized [NADPH--hemoprotein reductase] + H2O + H(+). The catalysed reaction is testosterone + reduced [NADPH--hemoprotein reductase] + O2 = 2-hydroxytestosterone + oxidized [NADPH--hemoprotein reductase] + H2O + H(+). It carries out the reaction testosterone + reduced [NADPH--hemoprotein reductase] + O2 = 6beta,17beta-dihydroxyandrost-4-en-3-one + oxidized [NADPH--hemoprotein reductase] + H2O + H(+). The protein operates within steroid metabolism; cholesterol degradation. It functions in the pathway lipid metabolism; C21-steroid hormone metabolism. P450 monooxygenase that plays a major role in cholesterol homeostasis in the brain. Primarily catalyzes the hydroxylation (with S stereochemistry) at C-24 of cholesterol side chain, triggering cholesterol diffusion out of neurons and its further degradation. By promoting constant cholesterol elimination in neurons, may activate the mevalonate pathway and coordinate the synthesis of new cholesterol and nonsterol isoprenoids involved in synaptic activity and learning. Further hydroxylates cholesterol derivatives and hormone steroids on both the ring and side chain of these molecules, converting them into active oxysterols involved in lipid signaling and biosynthesis. Acts as an epoxidase converting cholesta-5,24-dien-3beta-ol/desmosterol into (24S),25-epoxycholesterol, an abundant lipid ligand of nuclear NR1H2 and NR1H3 receptors shown to promote neurogenesis in developing brain. May also catalyze the oxidative metabolism of xenobiotics, such as clotrimazole. This Homo sapiens (Human) protein is Cholesterol 24-hydroxylase.